We begin with the raw amino-acid sequence, 325 residues long: Mitochondrial citrate transporter C (325 aa).

3 Solcar repeats span residues 15–105 (ASPA…YKQM), 117–208 (KATF…LKAF), and 221–310 (LPSY…LKGK). The next 6 helical transmembrane spans lie at 21 to 41 (LIAG…LDTI), 82 to 102 (GAVL…YESY), 121 to 141 (LAGL…MEVV), 187 to 207 (TALR…ELKA), 221 to 241 (LPSY…PFSN), and 282 to 303 (FYKG…TFTV).

Belongs to the mitochondrial carrier (TC 2.A.29) family.

The protein localises to the mitochondrion inner membrane. Mitochondrial transporter that does not mediate citrate export from mitochondria to cytoplasm. Its exact function has still to be determined. This is Mitochondrial citrate transporter C from Aspergillus niger (strain ATCC 1015 / CBS 113.46 / FGSC A1144 / LSHB Ac4 / NCTC 3858a / NRRL 328 / USDA 3528.7).